Reading from the N-terminus, the 332-residue chain is Ferredoxin--NADP reductase 1 (332 aa).

Residues Asp-35, Lys-43, Phe-48, Val-88, Phe-123, Asp-284, and Thr-325 each coordinate FAD.

This sequence belongs to the ferredoxin--NADP reductase type 2 family. Homodimer. Requires FAD as cofactor.

The catalysed reaction is 2 reduced [2Fe-2S]-[ferredoxin] + NADP(+) + H(+) = 2 oxidized [2Fe-2S]-[ferredoxin] + NADPH. The protein is Ferredoxin--NADP reductase 1 of Listeria monocytogenes serovar 1/2a (strain ATCC BAA-679 / EGD-e).